A 258-amino-acid polypeptide reads, in one-letter code: Ribosomal RNA small subunit methyltransferase A (258 aa).

Residues His13, Leu15, Gly40, Glu61, Asp86, and Asn106 each coordinate S-adenosyl-L-methionine.

The protein belongs to the class I-like SAM-binding methyltransferase superfamily. rRNA adenine N(6)-methyltransferase family. RsmA subfamily.

The protein localises to the cytoplasm. It carries out the reaction adenosine(1518)/adenosine(1519) in 16S rRNA + 4 S-adenosyl-L-methionine = N(6)-dimethyladenosine(1518)/N(6)-dimethyladenosine(1519) in 16S rRNA + 4 S-adenosyl-L-homocysteine + 4 H(+). Its function is as follows. Specifically dimethylates two adjacent adenosines (A1518 and A1519) in the loop of a conserved hairpin near the 3'-end of 16S rRNA in the 30S particle. May play a critical role in biogenesis of 30S subunits. In Coxiella burnetii (strain CbuG_Q212) (Coxiella burnetii (strain Q212)), this protein is Ribosomal RNA small subunit methyltransferase A.